Consider the following 128-residue polypeptide: Cystatin-1 (128 aa).

The signal sequence occupies residues 1-17 (MIRSAVVLTVLVGVCLA). One can recognise a Cystatin domain in the interval 20-128 (GFVGGWSQVD…TKEVTSFECN (109 aa)). Disulfide bonds link Cys84-Cys96 and Cys107-Cys127.

This sequence belongs to the cystatin family. Mainly expressed in gut.

The protein localises to the secreted. Its function is as follows. Inhibitor of cysteine proteinases. Strongly inhibits mammalian cathepsin B and H, and moderately inhibits mammalian cathepsin C. Also inhibits endogenous cathepsin B-like but not cathepsin C-like proteinases. May have a protective role against undesired digestion of a stored blood meal by endogenous peptidases. The sequence is that of Cystatin-1 from Ornithodoros moubata (Soft tick).